A 97-amino-acid polypeptide reads, in one-letter code: Small nuclear ribonucleoprotein Sm D3 (97 aa).

The Sm domain occupies 3–75 (LCIKLLHETQ…IRFLIVPDML (73 aa)).

Belongs to the snRNP core protein family. In terms of assembly, belongs to the 40S cdc5-associated complex (or cwf complex), a spliceosome sub-complex reminiscent of a late-stage spliceosome composed of the U2, U5 and U6 snRNAs and at least brr2, cdc5, cwf2/prp3, cwf3/syf1, cwf4/syf3, cwf5/ecm2, spp42/cwf6, cwf7/spf27, cwf8, cwf9, cwf10, cwf11, cwf12, prp45/cwf13, cwf14, cwf15, cwf16, cwf17, cwf18, cwf19, cwf20, cwf21, cwf22, cwf23, cwf24, cwf25, cwf26, cyp7/cwf27, cwf28, cwf29/ist3, lea1, msl1, prp5/cwf1, prp10, prp12/sap130, prp17, prp22, sap61, sap62, sap114, sap145, slu7, smb1, smd1, smd3, smf1, smg1 and syf2. Interacts with saf5; the interaction is direct.

It localises to the nucleus. Its subcellular location is the cytoplasm. The protein localises to the cytosol. Functionally, plays a role in pre-mRNA splicing as a core component of the spliceosomal U1, U2, U4 and U5 small nuclear ribonucleoproteins (snRNPs), the building blocks of the spliceosome. The chain is Small nuclear ribonucleoprotein Sm D3 (smd3) from Schizosaccharomyces pombe (strain 972 / ATCC 24843) (Fission yeast).